The chain runs to 310 residues: Protein CUP-SHAPED COTYLEDON 1 (310 aa).

Residues 20–172 (MPPGFRFHPT…EWVLCKVCLK (153 aa)) form the NAC domain. The DNA-binding element occupies 119-178 (LGMKKTLVFYKGRAPKGEKSCWVMHEYRLDGKFSYHYISSSAKDEWVLCKVCLKSGVVSR). Involved in transactivation activity regions lie at residues 179-210 (ETNLISSSSSSAVTGEFSSAGSAIAPIINTFA) and 306-310 (WPFTL).

In terms of tissue distribution, expressed in inflorescence stems, rosette leaves, aerial parts of seedlings, flowers, floral buds and roots.

It localises to the nucleus. Its function is as follows. Transcription activator of STM and KNAT6. Involved in molecular mechanisms regulating shoot apical meristem (SAM) formation during embryogenesis and organ separation. Required for the fusion of septa of gynoecia along the length of the ovaries. Activates the shoot formation in callus in a STM-dependent manner. Seems to act as an inhibitor of cell division. This chain is Protein CUP-SHAPED COTYLEDON 1 (NAC054), found in Arabidopsis thaliana (Mouse-ear cress).